Here is a 301-residue protein sequence, read N- to C-terminus: N-acetylmuramic acid 6-phosphate etherase (301 aa).

Positions 57 to 220 constitute an SIS domain; sequence ITEAFKKGGR…TTGAMIRSGK (164 aa). Glu-85 acts as the Proton donor in catalysis. Residue Glu-116 is part of the active site.

It belongs to the GCKR-like family. MurNAc-6-P etherase subfamily. Homodimer.

The enzyme catalyses N-acetyl-D-muramate 6-phosphate + H2O = N-acetyl-D-glucosamine 6-phosphate + (R)-lactate. It functions in the pathway amino-sugar metabolism; 1,6-anhydro-N-acetylmuramate degradation. It participates in amino-sugar metabolism; N-acetylmuramate degradation. The protein operates within cell wall biogenesis; peptidoglycan recycling. In terms of biological role, specifically catalyzes the cleavage of the D-lactyl ether substituent of MurNAc 6-phosphate, producing GlcNAc 6-phosphate and D-lactate. Together with AnmK, is also required for the utilization of anhydro-N-acetylmuramic acid (anhMurNAc) either imported from the medium or derived from its own cell wall murein, and thus plays a role in cell wall recycling. This is N-acetylmuramic acid 6-phosphate etherase from Photobacterium profundum (strain SS9).